The sequence spans 126 residues: Histone H2B type 1-C/E/G (126 aa).

Over residues 1–12 (MPEPAKSAPAPK) the composition is skewed to low complexity. Residues 1-36 (MPEPAKSAPAPKKGSKKAVTKAQKKDGKKRKRSRKE) form a disordered region. An N-acetylproline modification is found at Pro2. Position 3 is an ADP-ribosyl glutamic acid (Glu3). Position 6 is an N6-(2-hydroxyisobutyryl)lysine; alternate (Lys6). Lys6 carries the post-translational modification N6-(beta-hydroxybutyryl)lysine; alternate. At Lys6 the chain carries N6-acetyllysine; alternate. Residue Lys6 is modified to N6-butyryllysine; alternate. Lys6 carries the post-translational modification N6-crotonyllysine; alternate. Lys6 carries the post-translational modification N6-lactoyllysine; alternate. A Glycyl lysine isopeptide (Lys-Gly) (interchain with G-Cter in SUMO2); alternate cross-link involves residue Lys6. An ADP-ribosylserine modification is found at Ser7. Position 12 is an N6-(beta-hydroxybutyryl)lysine; alternate (Lys12). Lys12 and Lys13 each carry N6-acetyllysine; alternate. N6-crotonyllysine; alternate is present on residues Lys12 and Lys13. Lys12 is modified (N6-lactoyllysine; alternate). The residue at position 13 (Lys13) is an N6-(2-hydroxyisobutyryl)lysine; alternate. Residue Ser15 is modified to Phosphoserine; by STK4/MST1. Residues Lys16, Lys17, Lys21, and Lys24 each carry the N6-acetyllysine; alternate modification. An N6-crotonyllysine; alternate mark is found at Lys16, Lys17, Lys21, and Lys24. N6-lactoyllysine; alternate is present on residues Lys16, Lys17, Lys21, and Lys24. Lys17 is subject to N6-glutaryllysine; alternate. N6-(2-hydroxyisobutyryl)lysine; alternate occurs at positions 21 and 24. Lys21 is modified (N6-(beta-hydroxybutyryl)lysine; alternate). Lys21 carries the N6-butyryllysine; alternate modification. A Glycyl lysine isopeptide (Lys-Gly) (interchain with G-Cter in SUMO2); alternate cross-link involves residue Lys21. Lys25 carries the N6-(2-hydroxyisobutyryl)lysine modification. The residue at position 35 (Lys35) is an N6-(2-hydroxyisobutyryl)lysine; alternate. An N6-(beta-hydroxybutyryl)lysine; alternate modification is found at Lys35. Lys35 is modified (N6-crotonyllysine; alternate). Lys35 carries the N6-glutaryllysine; alternate modification. At Lys35 the chain carries N6-succinyllysine; alternate. Lys35 is covalently cross-linked (Glycyl lysine isopeptide (Lys-Gly) (interchain with G-Cter in ubiquitin); alternate). Glu36 bears the PolyADP-ribosyl glutamic acid mark. Phosphoserine; by AMPK is present on Ser37. N6-(2-hydroxyisobutyryl)lysine; alternate occurs at positions 44, 47, and 58. Lys44 carries the N6-lactoyllysine; alternate modification. 2 positions are modified to N6-glutaryllysine; alternate: Lys44 and Lys47. An N6-methyllysine; alternate modification is found at Lys47. Lys58 is modified (N6,N6-dimethyllysine; alternate). Residue Arg80 is modified to Dimethylated arginine. At Lys86 the chain carries N6-(2-hydroxyisobutyryl)lysine; alternate. Residue Lys86 is modified to N6-acetyllysine; alternate. Lys86 is modified (N6-lactoyllysine; alternate). At Lys86 the chain carries N6,N6,N6-trimethyllysine; alternate. Omega-N-methylarginine is present on residues Arg87 and Arg93. Lys109 bears the N6-(2-hydroxyisobutyryl)lysine; alternate mark. N6-(beta-hydroxybutyryl)lysine; alternate is present on Lys109. Lys109 is modified (N6-lactoyllysine; alternate). The residue at position 109 (Lys109) is an N6-glutaryllysine; alternate. Lys109 carries the post-translational modification N6-methyllysine; alternate. An O-linked (GlcNAc) serine glycan is attached at Ser113. The residue at position 116 (Thr116) is a Phosphothreonine. N6-(2-hydroxyisobutyryl)lysine; alternate occurs at positions 117 and 121. Lys117 carries the N6-(beta-hydroxybutyryl)lysine; alternate modification. An N6-lactoyllysine; alternate mark is found at Lys117 and Lys121. An N6-glutaryllysine; alternate mark is found at Lys117 and Lys121. Residues Lys117 and Lys121 each carry the N6-succinyllysine; alternate modification. N6-methylated lysine; alternate is present on Lys117. Residue Lys121 forms a Glycyl lysine isopeptide (Lys-Gly) (interchain with G-Cter in ubiquitin); alternate linkage.

This sequence belongs to the histone H2B family. As to quaternary structure, the nucleosome is a histone octamer containing two molecules each of H2A, H2B, H3 and H4 assembled in one H3-H4 heterotetramer and two H2A-H2B heterodimers. The octamer wraps approximately 147 bp of DNA. Interacts with VRK1; the interaction is mediated by the nucleosome acidic patch, a cluster of negatively charged residues of H2A and H2B forming a cleft within the nucleosome core. Post-translationally, monoubiquitination at Lys-35 (H2BK34Ub) by the MSL1/MSL2 dimer is required for histone H3 'Lys-4' (H3K4me) and 'Lys-79' (H3K79me) methylation and transcription activation at specific gene loci, such as HOXA9 and MEIS1 loci. Similarly, monoubiquitination at Lys-121 (H2BK120Ub) by the RNF20/40 complex gives a specific tag for epigenetic transcriptional activation and is also prerequisite for histone H3 'Lys-4' and 'Lys-79' methylation. It also functions cooperatively with the FACT dimer to stimulate elongation by RNA polymerase II. H2BK120Ub also acts as a regulator of mRNA splicing: deubiquitination by USP49 is required for efficient cotranscriptional splicing of a large set of exons. Phosphorylated on Ser-15 (H2BS14ph) by STK4/MST1 during apoptosis; which facilitates apoptotic chromatin condensation. Also phosphorylated on Ser-15 in response to DNA double strand breaks (DSBs), and in correlation with somatic hypermutation and immunoglobulin class-switch recombination. Phosphorylation at Ser-37 (H2BS36ph) by AMPK in response to stress promotes transcription. In terms of processing, glcNAcylation at Ser-113 promotes monoubiquitination of Lys-121. It fluctuates in response to extracellular glucose, and associates with transcribed genes. Post-translationally, ADP-ribosylated by PARP1 or PARP2 on Ser-7 (H2BS6ADPr) in response to DNA damage. H2BS6ADPr promotes recruitment of CHD1L. Mono-ADP-ribosylated on Glu-3 (H2BE2ADPr) by PARP3 in response to single-strand breaks. Poly ADP-ribosylation on Glu-36 (H2BE35ADPr) by PARP1 regulates adipogenesis: it inhibits phosphorylation at Ser-37 (H2BS36ph), thereby blocking expression of pro-adipogenetic genes. Crotonylation (Kcr) is specifically present in male germ cells and marks testis-specific genes in post-meiotic cells, including X-linked genes that escape sex chromosome inactivation in haploid cells. Crotonylation marks active promoters and enhancers and confers resistance to transcriptional repressors. It is also associated with post-meiotically activated genes on autosomes. In terms of processing, hydroxybutyrylation of histones is induced by starvation. Post-translationally, lactylated in macrophages by EP300/P300 by using lactoyl-CoA directly derived from endogenous or exogenous lactate, leading to stimulates gene transcription.

The protein resides in the nucleus. It localises to the chromosome. In terms of biological role, core component of nucleosome. Nucleosomes wrap and compact DNA into chromatin, limiting DNA accessibility to the cellular machineries which require DNA as a template. Histones thereby play a central role in transcription regulation, DNA repair, DNA replication and chromosomal stability. DNA accessibility is regulated via a complex set of post-translational modifications of histones, also called histone code, and nucleosome remodeling. The polypeptide is Histone H2B type 1-C/E/G (Mus musculus (Mouse)).